The sequence spans 272 residues: MEAEESEKAATEQEPLKGTEQTLDAEEEQEESEDAACGSKKRVVPGIVYLGHIPPRFRPLHVRNLLSAYGEVGRVFFQAEDRFVRRKKKAAAAAGGKKRSYSKDYTEGWVEFRDKRIAKRVAASLHNTPMGARRRSPFRYDLWNLKYLHRFTWSHLSEHLAFERQVRRQRLRAEVAQAKRETDFYLQSVERGQRFLAADGDPARPDGSWTFAQRPTEQELRAQKAARPGGRERARLVTAQDKARSNKGLLARIFGAPPPSESMEGPSLVRDS.

Met1 is modified (N-acetylmethionine). A compositionally biased stretch (basic and acidic residues) spans Met1–Lys17. The disordered stretch occupies residues Met1 to Gly38. Acidic residues predominate over residues Leu23 to Asp34. The region spanning Gly46–Leu142 is the RRM domain. The stretch at Ala161 to Arg191 forms a coiled coil. A disordered region spans residues Ala197–Ser272.

The protein belongs to the ESF2/ABP1 family. As to quaternary structure, interacts with ESF1/ABTAP. Interacts with IGHMBP2.

The protein resides in the nucleus. It localises to the nucleolus. Its function is as follows. Could be a novel TATA-binding protein (TBP) which can function as a basal transcription activator. Can act as a regulator of basal transcription for class II genes. This is Activator of basal transcription 1 (ABT1) from Pongo abelii (Sumatran orangutan).